Here is a 997-residue protein sequence, read N- to C-terminus: Synaptonemal complex protein 1 (997 aa).

Residues Pro102 to Lys112 carry the Mediates head to head self-assembly of N-terminal ends motif. Residues Lys118–Lys121 carry the Nuclear localization signal motif. 2 coiled-coil regions span residues Lys121 to Glu176 and Tyr212 to Ser696. The segment at Glu207 to Gln363 is interaction with SYCE3. Positions Glu698–Glu792 are required for pH-induced assembly of C-terminal ends into antiparallel tetramers. The Nuclear localization signal motif lies at Leu701–Val704. The stretch at Lys768–Thr806 forms a coiled coil. The interval Asn805 to Thr997 is DNA-binding. Ser824 bears the Phosphoserine mark. A disordered region spans residues Thr828–Ala863. A compositionally biased stretch (polar residues) spans Lys835–Ser851. Residues Gly852–Leu861 are compositionally biased toward basic and acidic residues. The short motif at Lys902 to Lys905 is the Nuclear localization signal element. The residue at position 940 (Thr940) is a Phosphothreonine.

In terms of assembly, structural component of synaptonemal complexes. Homotetramer that consists of an N-terminal four-helical bundle that bifurcates into two elongated C-terminal dimeric coiled coils. This tetrameric building block potentially self-assembles into a supramolecular zipper-like lattice to mediate meiotic chromosome synapsis. Self-assembly is likely initiated by local proton density at chromosome axis, which is predicted to trigger antiparallel back to back assembly of adjacent C-terminal ends into tetrameric structures that anchor to chromosomal DNA. Then the N-terminal ends are predicted to undergo cooperative antiparallel head to head assembly at the midline of synaptonemal complexes central element to form a zipper-like lattice between properly aligned homologous chromosomes. The nascent synapsis generated by SYCP1 is stabilized through interaction with central element proteins SYCE1 and SYCE2. Interacts (via tetrameric core) with SYCE3; the interaction remodels SYCP1 homotetramers to 2:1 heterotrimers with SYCE3. SYCP1/SYCE3 heterotrimers form lattice assemblies as part of the mature synaptonemal complex via both lateral and head-to-head interactions. Forms a complex with EWSR1, PRDM9, SYCP3 and REC8; complex formation is dependent of phosphorylated form of REC8 and requires PRDM9 bound to hotspot DNA; EWSR1 joins PRDM9 with the chromosomal axis through REC8. Interacts with SPO16. As to expression, testis.

It localises to the nucleus. The protein resides in the chromosome. It is found in the centromere. Functionally, major component of the transverse filaments of synaptonemal complexes, formed between homologous chromosomes during meiotic prophase. Required for normal assembly of the central element of the synaptonemal complexes. Required for normal centromere pairing during meiosis. Required for normal meiotic chromosome synapsis during oocyte and spermatocyte development and for normal male and female fertility. This Rattus norvegicus (Rat) protein is Synaptonemal complex protein 1.